We begin with the raw amino-acid sequence, 125 residues long: Small ribosomal subunit protein uS13 (125 aa).

The protein belongs to the universal ribosomal protein uS13 family. Part of the 30S ribosomal subunit. Forms a loose heterodimer with protein S19. Forms two bridges to the 50S subunit in the 70S ribosome.

Its function is as follows. Located at the top of the head of the 30S subunit, it contacts several helices of the 16S rRNA. In the 70S ribosome it contacts the 23S rRNA (bridge B1a) and protein L5 of the 50S subunit (bridge B1b), connecting the 2 subunits; these bridges are implicated in subunit movement. Contacts the tRNAs in the A and P-sites. The polypeptide is Small ribosomal subunit protein uS13 (Rickettsia rickettsii (strain Iowa)).